The sequence spans 291 residues: Nucleotide-binding protein Ccel_2290 (291 aa).

ATP is bound at residue 8–15; the sequence is GMSGAGKS. 59–62 serves as a coordination point for GTP; the sequence is DIRG.

The protein belongs to the RapZ-like family.

In terms of biological role, displays ATPase and GTPase activities. The sequence is that of Nucleotide-binding protein Ccel_2290 from Ruminiclostridium cellulolyticum (strain ATCC 35319 / DSM 5812 / JCM 6584 / H10) (Clostridium cellulolyticum).